A 166-amino-acid chain; its full sequence is NAD(P)H-quinone oxidoreductase subunit I, chloroplastic (166 aa).

2 consecutive 4Fe-4S ferredoxin-type domains span residues 55–84 (GRIHFEFDKCIACEVCVRVCPIDLPVVDWK) and 95–124 (LNYSIDFGICIFCGNCVEYCPTNCLSMTEE). Residues Cys64, Cys67, Cys70, Cys74, Cys104, Cys107, Cys110, and Cys114 each contribute to the [4Fe-4S] cluster site.

This sequence belongs to the complex I 23 kDa subunit family. NDH is composed of at least 16 different subunits, 5 of which are encoded in the nucleus. It depends on [4Fe-4S] cluster as a cofactor.

Its subcellular location is the plastid. The protein resides in the chloroplast thylakoid membrane. The enzyme catalyses a plastoquinone + NADH + (n+1) H(+)(in) = a plastoquinol + NAD(+) + n H(+)(out). The catalysed reaction is a plastoquinone + NADPH + (n+1) H(+)(in) = a plastoquinol + NADP(+) + n H(+)(out). Functionally, NDH shuttles electrons from NAD(P)H:plastoquinone, via FMN and iron-sulfur (Fe-S) centers, to quinones in the photosynthetic chain and possibly in a chloroplast respiratory chain. The immediate electron acceptor for the enzyme in this species is believed to be plastoquinone. Couples the redox reaction to proton translocation, and thus conserves the redox energy in a proton gradient. The sequence is that of NAD(P)H-quinone oxidoreductase subunit I, chloroplastic from Lactuca sativa (Garden lettuce).